Reading from the N-terminus, the 387-residue chain is Phosphoglycerate kinase (387 aa).

Substrate contacts are provided by residues 21–23, Arg36, 59–62, Arg113, and Arg146; these read DLN and HLGR. ATP-binding positions include Lys197, Glu314, and 340-343; that span reads GGDT.

The protein belongs to the phosphoglycerate kinase family. Monomer.

Its subcellular location is the cytoplasm. It carries out the reaction (2R)-3-phosphoglycerate + ATP = (2R)-3-phospho-glyceroyl phosphate + ADP. The protein operates within carbohydrate degradation; glycolysis; pyruvate from D-glyceraldehyde 3-phosphate: step 2/5. This chain is Phosphoglycerate kinase, found in Pseudomonas putida (strain W619).